The sequence spans 465 residues: Box C/D snoRNA protein 1 (465 aa).

Residues 1–72 (MEFAAENEGK…GSRQRPEEIP (72 aa)) are disordered. Ser-25 carries the post-translational modification Phosphoserine. Residues 56-70 (EIGDGEEGSRQRPEE) are compositionally biased toward basic and acidic residues. Residues Lys-79, Lys-108, Lys-118, Lys-138, Lys-148, Lys-157, Lys-168, Lys-178, and Lys-195 each participate in a glycyl lysine isopeptide (Lys-Gly) (interchain with G-Cter in SUMO2) cross-link. Cys-215, Cys-218, Cys-227, Cys-230, Cys-235, Cys-239, His-243, and Cys-249 together coordinate Zn(2+). An HIT-type zinc finger spans residues 215-249 (CETCGTEEAKYRCPRCMRYSCSLPCVKKHKAELTC). Lys-454 is covalently cross-linked (Glycyl lysine isopeptide (Lys-Gly) (interchain with G-Cter in SUMO2)).

Belongs to the BCD1 family. In terms of assembly, interacts with FBL, SNU13, NOP58, NUFIP1, RUVBL1, RUVBL2 and TAF9. Interacts (via HIT-type zinc finger) with the RUVBL1/RUVBL2 complex in the presence of ADP.

Its function is as follows. Required for box C/D snoRNAs accumulation involved in snoRNA processing, snoRNA transport to the nucleolus and ribosome biogenesis. The sequence is that of Box C/D snoRNA protein 1 (ZNHIT6) from Pongo abelii (Sumatran orangutan).